The chain runs to 254 residues: Phosphoglycerate mutase 1 (254 aa).

Substrate-binding positions include 10–17 (RHGESAWN) and 23–24 (SG). The Tele-phosphohistidine intermediate role is filled by histidine 11. 2 positions are modified to phosphoserine: serine 14 and serine 23. Tyrosine 26 bears the Phosphotyrosine mark. A Phosphoserine modification is found at serine 31. Residues arginine 62, 89–92 (ERHY), and lysine 100 each bind substrate. Catalysis depends on glutamate 89, which acts as the Proton donor/acceptor. Lysine 106 carries the post-translational modification N6-acetyllysine. 116 to 117 (RR) contacts substrate. Phosphoserine is present on serine 118. 187–188 (GN) serves as a coordination point for substrate. Lysine 251 bears the N6-acetyllysine; alternate mark. Lysine 251 is modified (N6-succinyllysine; alternate). Lysine 253 and lysine 254 each carry N6-acetyllysine.

The protein belongs to the phosphoglycerate mutase family. BPG-dependent PGAM subfamily. As to quaternary structure, homodimer. Post-translationally, acetylated at Lys-253, Lys-253 and Lys-254 under high glucose condition. Acetylation increases catalytic activity. Under glucose restriction SIRT1 levels dramatically increase and it deacetylates the enzyme. In terms of tissue distribution, expressed in the liver and brain. Not found in the muscle.

It carries out the reaction (2R)-2-phosphoglycerate = (2R)-3-phosphoglycerate. The enzyme catalyses (2R)-3-phospho-glyceroyl phosphate = (2R)-2,3-bisphosphoglycerate + H(+). Functionally, catalyzes the interconversion of 2-phosphoglycerate and 3-phosphoglyceratea crucial step in glycolysis, by using 2,3-bisphosphoglycerate. Also catalyzes the interconversion of (2R)-2,3-bisphosphoglycerate and (2R)-3-phospho-glyceroyl phosphate. The polypeptide is Phosphoglycerate mutase 1 (Homo sapiens (Human)).